The sequence spans 366 residues: DNA polymerase IV (366 aa).

The 192-residue stretch at 6-197 folds into the UmuC domain; sequence IIHVDMDYFY…LKVSKLWGIG (192 aa). 2 residues coordinate Mg(2+): aspartate 10 and aspartate 114. The active site involves glutamate 115.

Belongs to the DNA polymerase type-Y family. Monomer. Mg(2+) serves as cofactor.

The protein localises to the cytoplasm. The catalysed reaction is DNA(n) + a 2'-deoxyribonucleoside 5'-triphosphate = DNA(n+1) + diphosphate. Functionally, poorly processive, error-prone DNA polymerase involved in untargeted mutagenesis. Copies undamaged DNA at stalled replication forks, which arise in vivo from mismatched or misaligned primer ends. These misaligned primers can be extended by PolIV. Exhibits no 3'-5' exonuclease (proofreading) activity. May be involved in translesional synthesis. The protein is DNA polymerase IV of Methanosarcina acetivorans (strain ATCC 35395 / DSM 2834 / JCM 12185 / C2A).